Reading from the N-terminus, the 473-residue chain is Bifunctional protein GlmU (473 aa).

Positions 1 to 240 (MAIHPLDVVI…AAQVAGVNSP (240 aa)) are pyrophosphorylase. Residues K25, Q83, 88–89 (GT), 110–112 (SGD), G147, E165, and N238 contribute to the UDP-N-acetyl-alpha-D-glucosamine site. D112 lines the Mg(2+) pocket. Position 238 (N238) interacts with Mg(2+). A linker region spans residues 241 to 261 (VQLAELERVYQQRLATTLMEQ). The segment at 262–473 (GVRLADPARL…WARPVKKPGV (212 aa)) is N-acetyltransferase. Residues R348 and K366 each coordinate UDP-N-acetyl-alpha-D-glucosamine. Catalysis depends on H378, which acts as the Proton acceptor. 2 residues coordinate UDP-N-acetyl-alpha-D-glucosamine: Y381 and N392. Acetyl-CoA is bound by residues A395, 401–402 (NY), S420, G438, and R455.

It in the N-terminal section; belongs to the N-acetylglucosamine-1-phosphate uridyltransferase family. This sequence in the C-terminal section; belongs to the transferase hexapeptide repeat family. As to quaternary structure, homotrimer. Mg(2+) serves as cofactor.

It is found in the cytoplasm. It carries out the reaction alpha-D-glucosamine 1-phosphate + acetyl-CoA = N-acetyl-alpha-D-glucosamine 1-phosphate + CoA + H(+). The enzyme catalyses N-acetyl-alpha-D-glucosamine 1-phosphate + UTP + H(+) = UDP-N-acetyl-alpha-D-glucosamine + diphosphate. Its pathway is nucleotide-sugar biosynthesis; UDP-N-acetyl-alpha-D-glucosamine biosynthesis; N-acetyl-alpha-D-glucosamine 1-phosphate from alpha-D-glucosamine 6-phosphate (route II): step 2/2. The protein operates within nucleotide-sugar biosynthesis; UDP-N-acetyl-alpha-D-glucosamine biosynthesis; UDP-N-acetyl-alpha-D-glucosamine from N-acetyl-alpha-D-glucosamine 1-phosphate: step 1/1. It functions in the pathway bacterial outer membrane biogenesis; LPS lipid A biosynthesis. In terms of biological role, catalyzes the last two sequential reactions in the de novo biosynthetic pathway for UDP-N-acetylglucosamine (UDP-GlcNAc). The C-terminal domain catalyzes the transfer of acetyl group from acetyl coenzyme A to glucosamine-1-phosphate (GlcN-1-P) to produce N-acetylglucosamine-1-phosphate (GlcNAc-1-P), which is converted into UDP-GlcNAc by the transfer of uridine 5-monophosphate (from uridine 5-triphosphate), a reaction catalyzed by the N-terminal domain. This chain is Bifunctional protein GlmU, found in Polaromonas naphthalenivorans (strain CJ2).